The sequence spans 88 residues: Small ribosomal subunit protein uS15c (88 aa).

This sequence belongs to the universal ribosomal protein uS15 family. As to quaternary structure, part of the 30S ribosomal subunit.

It localises to the plastid. Its subcellular location is the chloroplast. This Cycas taitungensis (Prince sago) protein is Small ribosomal subunit protein uS15c (rps15).